Consider the following 308-residue polypeptide: Ornithine carbamoyltransferase (308 aa).

Carbamoyl phosphate is bound by residues 53–56 (STRT), Q80, R104, and 131–134 (HPCQ). Residues N162, D225, and 229–230 (SM) contribute to the L-ornithine site. Carbamoyl phosphate is bound by residues 265 to 266 (CL) and R293.

Belongs to the aspartate/ornithine carbamoyltransferase superfamily. OTCase family.

It is found in the cytoplasm. The enzyme catalyses carbamoyl phosphate + L-ornithine = L-citrulline + phosphate + H(+). Its pathway is amino-acid biosynthesis; L-arginine biosynthesis; L-arginine from L-ornithine and carbamoyl phosphate: step 1/3. In terms of biological role, reversibly catalyzes the transfer of the carbamoyl group from carbamoyl phosphate (CP) to the N(epsilon) atom of ornithine (ORN) to produce L-citrulline. In Synechocystis sp. (strain ATCC 27184 / PCC 6803 / Kazusa), this protein is Ornithine carbamoyltransferase (argF).